A 333-amino-acid chain; its full sequence is Glycerol-3-phosphate dehydrogenase [NAD(P)+] (333 aa).

NADPH-binding residues include serine 10, tryptophan 11, histidine 31, arginine 32, and lysine 105. Sn-glycerol 3-phosphate contacts are provided by lysine 105, glycine 136, and serine 138. Alanine 140 contributes to the NADPH binding site. Positions 191, 244, 254, 255, and 256 each coordinate sn-glycerol 3-phosphate. Lysine 191 serves as the catalytic Proton acceptor. Residue arginine 255 coordinates NADPH. Positions 279 and 281 each coordinate NADPH.

It belongs to the NAD-dependent glycerol-3-phosphate dehydrogenase family.

It is found in the cytoplasm. It catalyses the reaction sn-glycerol 3-phosphate + NAD(+) = dihydroxyacetone phosphate + NADH + H(+). The catalysed reaction is sn-glycerol 3-phosphate + NADP(+) = dihydroxyacetone phosphate + NADPH + H(+). It participates in membrane lipid metabolism; glycerophospholipid metabolism. Functionally, catalyzes the reduction of the glycolytic intermediate dihydroxyacetone phosphate (DHAP) to sn-glycerol 3-phosphate (G3P), the key precursor for phospholipid synthesis. The polypeptide is Glycerol-3-phosphate dehydrogenase [NAD(P)+] (Chlorobium luteolum (strain DSM 273 / BCRC 81028 / 2530) (Pelodictyon luteolum)).